We begin with the raw amino-acid sequence, 653 residues long: tRNA uridine 5-carboxymethylaminomethyl modification enzyme MnmG (653 aa).

FAD-binding positions include 18 to 23 (GAGHAG), valine 130, and threonine 195. Position 287-301 (287-301 (GPRYCPSIEDKVVRF)) interacts with NAD(+). Glutamine 384 serves as a coordination point for FAD. Positions 624–653 (SQTKSSASVDKRASSDNESSRPTSSASDSL) are disordered. A compositionally biased stretch (basic and acidic residues) spans 632-642 (VDKRASSDNES). The span at 643–653 (SRPTSSASDSL) shows a compositional bias: polar residues.

Belongs to the MnmG family. Homodimer. Heterotetramer of two MnmE and two MnmG subunits. FAD is required as a cofactor.

It localises to the cytoplasm. Functionally, NAD-binding protein involved in the addition of a carboxymethylaminomethyl (cmnm) group at the wobble position (U34) of certain tRNAs, forming tRNA-cmnm(5)s(2)U34. In Rhodopirellula baltica (strain DSM 10527 / NCIMB 13988 / SH1), this protein is tRNA uridine 5-carboxymethylaminomethyl modification enzyme MnmG.